We begin with the raw amino-acid sequence, 160 residues long: Crossover junction endodeoxyribonuclease RuvC (160 aa).

Residues D7, E70, and D142 contribute to the active site. D7, E70, and D142 together coordinate Mg(2+).

It belongs to the RuvC family. In terms of assembly, homodimer which binds Holliday junction (HJ) DNA. The HJ becomes 2-fold symmetrical on binding to RuvC with unstacked arms; it has a different conformation from HJ DNA in complex with RuvA. In the full resolvosome a probable DNA-RuvA(4)-RuvB(12)-RuvC(2) complex forms which resolves the HJ. The cofactor is Mg(2+).

It localises to the cytoplasm. The enzyme catalyses Endonucleolytic cleavage at a junction such as a reciprocal single-stranded crossover between two homologous DNA duplexes (Holliday junction).. The RuvA-RuvB-RuvC complex processes Holliday junction (HJ) DNA during genetic recombination and DNA repair. Endonuclease that resolves HJ intermediates. Cleaves cruciform DNA by making single-stranded nicks across the HJ at symmetrical positions within the homologous arms, yielding a 5'-phosphate and a 3'-hydroxyl group; requires a central core of homology in the junction. The consensus cleavage sequence is 5'-(A/T)TT(C/G)-3'. Cleavage occurs on the 3'-side of the TT dinucleotide at the point of strand exchange. HJ branch migration catalyzed by RuvA-RuvB allows RuvC to scan DNA until it finds its consensus sequence, where it cleaves and resolves the cruciform DNA. The polypeptide is Crossover junction endodeoxyribonuclease RuvC (Ehrlichia ruminantium (strain Welgevonden)).